Consider the following 341-residue polypeptide: Paired box protein Pax-9 (341 aa).

A DNA-binding region (paired) is located at residues 4 to 130 (AFGEVNQLGG…SSISRILRNK (127 aa)). Residues 7 to 63 (EVNQLGGVFVNGRPLPNAIRLRIVELAQLGIRPCDISRQLRVSHGCVSKILARYNET) are PAI subdomain. The RED subdomain stretch occupies residues 82–130 (TVVKHIRTYKQRDPGIFAWEIRDRLLADGVCDKYNVPSVSSISRILRNK). An interaction with KDM5B region spans residues 168-189 (AAAAKVPTPPGVPAIPGSVAMP).

In terms of assembly, interacts with KDM5B.

The protein resides in the nucleus. Transcription factor required for normal development of thymus, parathyroid glands, ultimobranchial bodies, teeth, skeletal elements of skull and larynx as well as distal limbs. The protein is Paired box protein Pax-9 (PAX9) of Daubentonia madagascariensis (Aye-aye).